Consider the following 72-residue polypeptide: Light-harvesting polypeptide B-885 alpha-1 chain (72 aa).

Residues 1–16 are Cytoplasmic-facing; it reads SAPAQWKLWLVMDPRT. A helical transmembrane segment spans residues 17 to 37; that stretch reads VMIGTAAWLGVLALLIHFLLL. H33 contacts a bacteriochlorophyll. Over 38–72 the chain is Periplasmic; that stretch reads GTERFNWIDTGLKEQKATAAAQAAITPAPVTAAAK.

This sequence belongs to the antenna complex alpha subunit family. As to quaternary structure, the core complex is formed by different alpha and beta chains, binding bacteriochlorophyll molecules, and arranged most probably in tetrameric structures disposed around the reaction center. The non-pigmented gamma chains may constitute additional components.

The protein localises to the cell inner membrane. Functionally, antenna complexes are light-harvesting systems, which transfer the excitation energy to the reaction centers. This is Light-harvesting polypeptide B-885 alpha-1 chain from Rhodocyclus tenuis (Rhodospirillum tenue).